A 556-amino-acid chain; its full sequence is Formate--tetrahydrofolate ligase (556 aa).

ATP is bound at residue 65 to 72 (TPAGEGKT).

Belongs to the formate--tetrahydrofolate ligase family.

The enzyme catalyses (6S)-5,6,7,8-tetrahydrofolate + formate + ATP = (6R)-10-formyltetrahydrofolate + ADP + phosphate. The protein operates within one-carbon metabolism; tetrahydrofolate interconversion. The polypeptide is Formate--tetrahydrofolate ligase (Proteus mirabilis (strain HI4320)).